A 634-amino-acid polypeptide reads, in one-letter code: Putative peptidoglycan O-acetyltransferase YrhL (634 aa).

11 helical membrane-spanning segments follow: residues 10–30 (YIPG…TYHL), 38–58 (GFIG…SILL), 79–99 (RLLP…VLFD), 110–130 (AISS…LSYF), 145–165 (LAIE…GMYI), 172–192 (LAAV…VLYE), 244–264 (FLAF…EPFL), 270–290 (LFIS…SSFL), 307–327 (YGIY…QEIG), 329–349 (PVFW…ELSY), and 385–405 (MSIG…SGLA). The disordered stretch occupies residues 413–481 (KWTYSSQETN…SQQLKKPADT (69 aa)). The segment covering 414–429 (WTYSSQETNADTSQAS) has biased composition (polar residues). 2 stretches are compositionally biased toward basic and acidic residues: residues 430-447 (GDKK…EQKT) and 455-470 (KENK…KKDT).

The protein belongs to the acyltransferase 3 family.

It is found in the cell membrane. The polypeptide is Putative peptidoglycan O-acetyltransferase YrhL (yrhL) (Bacillus subtilis (strain 168)).